Consider the following 456-residue polypeptide: Aminotransferase ALD1, chloroplastic (456 aa).

Residues 1 to 43 (MVSLMFFSSASPLCSSPSKIPKASLDFEMKKLGGSTKLVRNVN) constitute a chloroplast transit peptide. Residues Tyr-108, 142–143 (AQ), Asn-223, Asp-251, Tyr-254, Ser-281, Ser-283, Arg-292, and Asn-323 each bind pyridoxal 5'-phosphate.

This sequence belongs to the class-I pyridoxal-phosphate-dependent aminotransferase family. LL-diaminopimelate aminotransferase subfamily. Pyridoxal 5'-phosphate serves as cofactor. In terms of tissue distribution, highly expressed in senescing leaves, flowers, siliques and seeds.

It localises to the plastid. Its subcellular location is the chloroplast. Its function is as follows. Aminotransferase involved in local and systemic acquired resistance (SAR) to the bacterial pathogen P.syringae. Required for salicylic acid (SA) and camalexin accumulation upon pathogen infection. Possesses aminotransferase activity in vitro and may generate amino-acid-derived defense signals in vivo. May be involved in ethylene-induced senescence signaling. Involved in the biosynthesis of pipecolate (Pip), a metabolite that orchestrates defense amplification, positive regulation of SA biosynthesis, and priming to guarantee effective local resistance induction and the establishment of SAR. Converts lysine to alpha-keto-epsilon-aminocaproate, which then can spontaneously cyclize to form delta-(1)-piperideine-2-carboxylate (P2C). P2C is converted to Pip by SARD4. May produce non-Pip metabolites that play roles in immunity. Involved in the synthesis of distinct metabolite signals that affect basal and early defenses, and later defense responses. The polypeptide is Aminotransferase ALD1, chloroplastic (Arabidopsis thaliana (Mouse-ear cress)).